A 44-amino-acid chain; its full sequence is Photosystem I reaction center subunit IX (44 aa).

A helical transmembrane segment spans residues 9–29 (WFRSAPVVATIWIVLTAGILV).

The protein belongs to the PsaJ family.

It localises to the cellular thylakoid membrane. In terms of biological role, may help in the organization of the PsaE and PsaF subunits. In Prochlorococcus marinus (strain MIT 9211), this protein is Photosystem I reaction center subunit IX.